The following is a 265-amino-acid chain: Osteoclast-associated immunoglobulin-like receptor (265 aa).

An N-terminal signal peptide occupies residues 1–18 (MVLSLILQLSTLWPACRA). Residues 19–231 (DFTPTAPLAS…LDYTQGNLIR (213 aa)) lie on the Extracellular side of the membrane. Ig-like domains are found at residues 22–115 (PTAP…SQPS) and 125–218 (QLPR…SFEG). The N-linked (GlcNAc...) asparagine glycan is linked to asparagine 47. The cysteines at positions 52 and 99 are disulfide-linked. A glycan (N-linked (GlcNAc...) asparagine) is linked at asparagine 144. The helical transmembrane segment at 232–248 (LGLAGMVLICLGIIVTC) threads the bilayer. Topologically, residues 249–265 (DWHSRSSAFDGLLPQQN) are cytoplasmic.

The protein belongs to the leukocyte receptor complex/polymeric immunoglobulin receptor (PIR/LRC) family. As to expression, specifically expressed in preosteoclasts or mature osteoclasts.

The protein resides in the cell membrane. In terms of biological role, regulator of osteoclastogenesis which plays an important bone-specific function in osteoclast differentiation. The chain is Osteoclast-associated immunoglobulin-like receptor (Oscar) from Mus musculus (Mouse).